Here is a 409-residue protein sequence, read N- to C-terminus: Peptidase T (409 aa).

Position 78 (His-78) interacts with Zn(2+). Residue Asp-80 is part of the active site. Asp-140 contacts Zn(2+). The active-site Proton acceptor is Glu-173. Zn(2+)-binding residues include Glu-174, Asp-196, and His-379.

Belongs to the peptidase M20B family. The cofactor is Zn(2+).

The protein localises to the cytoplasm. The catalysed reaction is Release of the N-terminal residue from a tripeptide.. Cleaves the N-terminal amino acid of tripeptides. This Serratia proteamaculans (strain 568) protein is Peptidase T.